A 505-amino-acid chain; its full sequence is Probable alpha-L-arabinofuranosidase C (505 aa).

Residues asparagine 81, asparagine 152, asparagine 269, and asparagine 438 are each glycosylated (N-linked (GlcNAc...) asparagine).

It belongs to the glycosyl hydrolase 51 family.

The protein resides in the secreted. It carries out the reaction Hydrolysis of terminal non-reducing alpha-L-arabinofuranoside residues in alpha-L-arabinosides.. Its pathway is glycan metabolism; L-arabinan degradation. In terms of biological role, alpha-L-arabinofuranosidase involved in the degradation of arabinoxylan, a major component of plant hemicellulose. Acts only on small linear 1,5-alpha-linked L-arabinofuranosyl oligosaccharides. The protein is Probable alpha-L-arabinofuranosidase C (abfC) of Aspergillus fumigatus (strain ATCC MYA-4609 / CBS 101355 / FGSC A1100 / Af293) (Neosartorya fumigata).